The following is a 200-amino-acid chain: COMM domain-containing protein 7 (200 aa).

The region spanning 133 to 200 is the COMM domain; sequence QLIDMEWKFG…RVRTSMECFC (68 aa).

Belongs to the COMM domain-containing protein 7 family. In terms of assembly, component of the commander complex consisting of the CCC subcomplex and the retriever subcomplex. Component of the CCC (COMMD/CCDC22/CCDC93) subcomplex consisting of COMMD1, COMMD2, COMMD3, COMMD4, COMMD5, COMMD6, COMMD7, COMMD8, COMMD9, COMMD10, CCDC22 and CCDC93; within the complex forms a heterodimer with COMMD9. Interacts with RELA. Interacts with CCDC22, CCDC93, SCNN1B, CUL7. In terms of tissue distribution, widely expressed with highest expression in lung.

It localises to the cytoplasmic vesicle. Functionally, scaffold protein in the commander complex that is essential for endosomal recycling of transmembrane cargos; the commander complex is composed of the CCC subcomplex and the retriever subcomplex. May modulate activity of cullin-RING E3 ubiquitin ligase (CRL) complexes. Associates with the NF-kappa-B complex and suppresses its transcriptional activity. The protein is COMM domain-containing protein 7 (COMMD7) of Homo sapiens (Human).